Here is a 1272-residue protein sequence, read N- to C-terminus: MAVIKKGARRKDVKEPKKRSAKIKKATFDANKKKEVGISDLTLLSKISDESINENLKKRFKNGIIYTYIGHVLISVNPFRDLGIYTNAVLESYKGKNRLEVPPHVFAIAESMYYNLKSYNENQCVIISGESGAGKTEAAKRIMQYIAAASNSHSESIGKIKDMVLATNPLLESFGCAKTLRNNNSSRHGKYLEIKFNSQFEPCAGNITNYLLEKQRVVGQIKNERNFHIFYQFTKGASDTYKQMFGVQMPEQYIYTAAAGCTTADTIDDVKDYEGTLEAMRTIGLVQEEQDQIFRMLAAILWIGNISFIENEEGNAQVGDTSVTDFVAYLLQVDASLLVKCLVERIMQTSHGMKRGSVYHVPLNPVQATAVRDALAKAIYNNLFDWIVDRVNVSLQAFPGADKSIGILDIYGFEIFEHNSFEQICINYVNEKLQQIFIQLTLKAEQETYEREKIKWTPIKYFDNKVVCDLIEAKNPPGILAAMNDSIATAHADSNAADQAFAQRLNLFNSNPYFELRANKFVIKHYAGDVTYDINGITDKNKDQLQKDLIELIGTTTNTFLSTIFPDDVDKDSKRRPPTAGDKIIKSANELVETLSKAEPSYIRTIKPNQTKSPNDYDDHQVLHQVKYLGLQENVRIRRAGFAYRQTFEKFVERFYLLSPDCSYAGDYTWDGDTLEAVKLILRDAMIPEKEFQLGVTSVFIKTPESLFALEDMRDKYWYNMAARIQRAWRRFLQRRIDAAIKIQRTIREKKGGNKYVKLRDYGTKLLAGKKERRSMSLLGYRAFMGDYLSCNESKTKGSYIRRQVGIKDKVVFSIKGECLHSKFGRSAQRLKKVFILTKKTFYIIGQTREQNAMKYTQDYKIDVGKIKQVSLTNLQDDWMGVILVNSTQSDPLINTPFKTELMTRLKKLNEKIMIKVGPTIEYHKQPNKLHTVRSKISDSAPKYGDIYKSSTIYVRRGHPANSKSNKKPKNPGGLSGKPIKSKKSKHKSTHKHTHSHRSHRDAAKKQPLPSQKPVNPLSLAATAAQAAYNPKPDKTVPIKSSAIPAAKVSSKHSSKPSSKEKVAVKKASSSHKSSSAKQNQVSMPPSKGVEKNKEPLKETTATATANIPIPPPPPPMGQPKDPKFEAAYDFPGSGSSSELPLKKGDIVFISRDEPSGWSLAKLLDGSKEGWVPTAYMTPYKDTRNTVPVAATGAVNDVTNQKSSQIDNTISSAQEGVQFGSATVGPTSDNQSNPVGTFSDGLASALAARANKMRAESADDDDNDDGDDDDDW.

A disordered region spans residues methionine 1–serine 20. The Myosin motor domain maps to valine 36–aspartate 715. Glycine 129–threonine 136 provides a ligand contact to ATP. Serine 357 carries the phosphoserine modification. The actin-binding stretch occupies residues alanine 588 to glutamine 610. IQ domains follow at residues tyrosine 719–alanine 739 and alanine 740–lysine 765. The TH1 domain maps to lysine 771 to alanine 961. 3 disordered regions span residues serine 951–valine 1015, tyrosine 1029–proline 1141, and valine 1217–tryptophan 1272. Residues isoleucine 980–histidine 1000 show a composition bias toward basic residues. The span at lysine 1066–lysine 1078 shows a compositional bias: low complexity. Positions glycine 1089–lysine 1098 are enriched in basic and acidic residues. The segment covering proline 1109 to glycine 1118 has biased composition (pro residues). One can recognise an SH3 domain in the interval proline 1120 to aspartate 1182. Polar residues predominate over residues valine 1217–glycine 1236. The segment covering alanine 1258–tryptophan 1272 has biased composition (acidic residues).

It belongs to the TRAFAC class myosin-kinesin ATPase superfamily. Myosin family. Interacts (via myosin motor domain) with SHE4; this interaction is important for proper localization and may regulate the interaction of the motor domain with actin. Interacts (via SH3 domain) with VRP1; this interaction is required for localization to sites of polarized growth and may regulate the interaction of the tail domain with actin. Interacts (via SH3 domain) with PAN1; this interaction is important for late stages of endocytopsis. Interacts (via SH3 domain) with BBC1 and LAS17. Interacts (via C-terminal acidic tail) with ARC19 and ARC40; ARC19 and ARC40 are Arp2/3 complex subunits. In terms of processing, phosphorylation of the TEDS site (Ser-357) is required for the polarization of the actin cytoskeleton and for ligand-induced, but not for constitutive internalization of STE2. Phosphorylation probably activates the myosin-I ATPase. Ser-357 is phosphorylated by CLA4 and STE20 in vitro.

It localises to the cytoplasm. It is found in the cytoskeleton. The protein localises to the actin patch. Its function is as follows. One of two redundant type-I myosins implicated in the organization of the actin cytoskeleton. Required for proper actin cytoskeleton polarization and for the internalization step in endocytosis. At the cell cortex, assembles in patch-like structures together with proteins from the actin-polymerizing machinery and promotes actin assembly. Functions redundantly with LAS17 as actin nucleation-promoting factor (NPF) for the Arp2/3 complex. Motor domain phosphorylation by PAK kinases CLA4 and STE20 promotes CDC42-regulated actin assembly. Functions together with the NPF PAN1 in late stages of endocytosis. Motor domain phosphorylation by PDK1 kinases PKH1 and PKH2, and by SGK kinases YPK1 and YPK2, promotes ligand-induced, but not constitutive endocytosis of the G protein-coupled receptor STE2. The polypeptide is Myosin-3 (MYO3) (Saccharomyces cerevisiae (strain ATCC 204508 / S288c) (Baker's yeast)).